The chain runs to 700 residues: Long-chain-fatty-acid--CoA ligase 1 (700 aa).

Residues 1-21 (MVAQYTVPVGKAANEHETAPR) form a disordered region. Lys-189 participates in a covalent cross-link: Glycyl lysine isopeptide (Lys-Gly) (interchain with G-Cter in ubiquitin). 269-280 (YTSGSTGEPKGV) provides a ligand contact to ATP. An FACS motif is present at residues 531-580 (DGWFKTGDIGEWEANGHLKIIDRKKNLVKTMNGEYIALEKLESVYRSNEY).

The protein belongs to the ATP-dependent AMP-binding enzyme family. In terms of assembly, interacts with FAT1. Mg(2+) is required as a cofactor.

The protein localises to the lipid droplet. Its subcellular location is the cell membrane. It carries out the reaction a long-chain fatty acid + ATP + CoA = a long-chain fatty acyl-CoA + AMP + diphosphate. The catalysed reaction is (9Z)-octadecenoate + ATP + CoA = (9Z)-octadecenoyl-CoA + AMP + diphosphate. It catalyses the reaction hexadecanoate + ATP + CoA = hexadecanoyl-CoA + AMP + diphosphate. The enzyme catalyses (9Z)-hexadecenoate + ATP + CoA = (9Z)-hexadecenoyl-CoA + AMP + diphosphate. It carries out the reaction tetradecanoate + ATP + CoA = tetradecanoyl-CoA + AMP + diphosphate. The catalysed reaction is (9Z)-tetradecenoate + ATP + CoA = (9Z)-tetradecenoyl-CoA + AMP + diphosphate. It catalyses the reaction (9Z,12Z)-octadecadienoate + ATP + CoA = (9Z,12Z)-octadecadienoyl-CoA + AMP + diphosphate. The enzyme catalyses dodecanoate + ATP + CoA = dodecanoyl-CoA + AMP + diphosphate. It carries out the reaction pentadecanoate + ATP + CoA = pentadecanoyl-CoA + AMP + diphosphate. The catalysed reaction is undecanoate + ATP + CoA = undecanoyl-CoA + AMP + diphosphate. It catalyses the reaction heptadecanoate + ATP + CoA = heptadecanoyl-CoA + AMP + diphosphate. The enzyme catalyses octadecanoate + ATP + CoA = octadecanoyl-CoA + AMP + diphosphate. In terms of biological role, activates long-chain fatty acids (LCFA) by esterification of the fatty acids into metabolically active CoA-thioesters for subsequent degradation or incorporation into phospholipids. Also facilitates the transport of LCFAs into the cell, either by active transport or by decreasing the intracellular LCFA concentration. It may supplement intracellular myristoyl-CoA pools from exogenous myristate. Preferentially acts on C12:0-C16:0 fatty acids with myristic and pentadecanic acid (C15:0) having the highest activities. Also involved in long-chain base (LCB) uptake of sphingolipids. In contrast ot LCFA uptake, LCB uptake does not require ATP, suggesting that the enzyme is directly involved in active LCB uptake. Involved in the sphingolipid-to-glycerolipid metabolic pathway, converting the sphingolipid metabolite hexadecenoic acid to hexadecenoyl-CoA, which is then further converted to glycerolipids. The polypeptide is Long-chain-fatty-acid--CoA ligase 1 (FAA1) (Saccharomyces cerevisiae (strain ATCC 204508 / S288c) (Baker's yeast)).